A 129-amino-acid chain; its full sequence is Small ribosomal subunit protein uS11 (129 aa).

It belongs to the universal ribosomal protein uS11 family. Part of the 30S ribosomal subunit. Interacts with proteins S7 and S18. Binds to IF-3.

Functionally, located on the platform of the 30S subunit, it bridges several disparate RNA helices of the 16S rRNA. Forms part of the Shine-Dalgarno cleft in the 70S ribosome. This is Small ribosomal subunit protein uS11 from Aliivibrio fischeri (strain ATCC 700601 / ES114) (Vibrio fischeri).